The sequence spans 117 residues: UPF0122 protein Dred_2057 (117 aa).

This sequence belongs to the UPF0122 family.

In terms of biological role, might take part in the signal recognition particle (SRP) pathway. This is inferred from the conservation of its genetic proximity to ftsY/ffh. May be a regulatory protein. The chain is UPF0122 protein Dred_2057 from Desulforamulus reducens (strain ATCC BAA-1160 / DSM 100696 / MI-1) (Desulfotomaculum reducens).